Consider the following 363-residue polypeptide: 3-dehydroquinate synthase (363 aa).

NAD(+) contacts are provided by residues 134-135, K147, and K156; that span reads TT. Zn(2+)-binding residues include E189, H254, and H271.

The protein belongs to the sugar phosphate cyclases superfamily. Dehydroquinate synthase family. Co(2+) serves as cofactor. Zn(2+) is required as a cofactor. Requires NAD(+) as cofactor.

The protein localises to the cytoplasm. The enzyme catalyses 7-phospho-2-dehydro-3-deoxy-D-arabino-heptonate = 3-dehydroquinate + phosphate. It participates in metabolic intermediate biosynthesis; chorismate biosynthesis; chorismate from D-erythrose 4-phosphate and phosphoenolpyruvate: step 2/7. Functionally, catalyzes the conversion of 3-deoxy-D-arabino-heptulosonate 7-phosphate (DAHP) to dehydroquinate (DHQ). This Prochlorococcus marinus (strain MIT 9215) protein is 3-dehydroquinate synthase.